A 92-amino-acid chain; its full sequence is Probable Fe(2+)-trafficking protein (92 aa).

The protein belongs to the Fe(2+)-trafficking protein family.

Its function is as follows. Could be a mediator in iron transactions between iron acquisition and iron-requiring processes, such as synthesis and/or repair of Fe-S clusters in biosynthetic enzymes. This Xanthomonas oryzae pv. oryzae (strain MAFF 311018) protein is Probable Fe(2+)-trafficking protein.